The sequence spans 64 residues: Prokaryotic ubiquitin-like protein Pup (64 aa).

The span at 1 to 11 (MAQEQTKRTGG) shows a compositional bias: basic and acidic residues. The disordered stretch occupies residues 1–37 (MAQEQTKRTGGGDEDDTPGADGAAGQERREKLAEDTD). Residues 21-58 (DGAAGQERREKLAEDTDDLLDEIDDVLEENAEDFVRAY) are ARC ATPase binding. Positions 24 to 52 (AGQERREKLAEDTDDLLDEIDDVLEENAE) form a coiled coil. Residue glutamine 64 is modified to Deamidated glutamine. An Isoglutamyl lysine isopeptide (Gln-Lys) (interchain with K-? in acceptor proteins) cross-link involves residue glutamine 64.

The protein belongs to the prokaryotic ubiquitin-like protein family. In terms of assembly, strongly interacts with the proteasome-associated ATPase ARC through a hydrophobic interface; the interacting region of Pup lies in its C-terminal half. There is one Pup binding site per ARC hexamer ring. Is modified by deamidation of its C-terminal glutamine to glutamate by the deamidase Dop, a prerequisite to the subsequent pupylation process.

Its pathway is protein degradation; proteasomal Pup-dependent pathway. Protein modifier that is covalently attached to lysine residues of substrate proteins, thereby targeting them for proteasomal degradation. The tagging system is termed pupylation. The protein is Prokaryotic ubiquitin-like protein Pup of Rhodococcus jostii (strain RHA1).